Consider the following 303-residue polypeptide: MRNSLTIGTRASKLALVQTHMIRDALQAAHPGLTVAVERITTRGDIILDRPLNAIGDKGLFVVEIEEAMRAGRVDLAVHSAKDLPSTLPPDMTLAVCPRRADPRDALVAQPGMTLASLPHGARVGTSSLRRACQLRALRPDLTLLDLRGNVDTRLRKLREGQYDAIVLAAAGLKRLGLEEVITELLEPDVLIPAVGQGIIGVEARAGDDEVLRLLAPLDDPAARAAITAERAFLARIGGGCRVPVGALALLEGDELLLYGMIGALDGRMVRGMRSGSASDPAGLGSALAEELLDAGGQALLAG.

Cys241 carries the post-translational modification S-(dipyrrolylmethanemethyl)cysteine.

This sequence belongs to the HMBS family. In terms of assembly, monomer. Dipyrromethane serves as cofactor.

It carries out the reaction 4 porphobilinogen + H2O = hydroxymethylbilane + 4 NH4(+). It functions in the pathway porphyrin-containing compound metabolism; protoporphyrin-IX biosynthesis; coproporphyrinogen-III from 5-aminolevulinate: step 2/4. The protein operates within porphyrin-containing compound metabolism; chlorophyll biosynthesis. Its function is as follows. Tetrapolymerization of the monopyrrole PBG into the hydroxymethylbilane pre-uroporphyrinogen in several discrete steps. In Roseiflexus castenholzii (strain DSM 13941 / HLO8), this protein is Porphobilinogen deaminase.